We begin with the raw amino-acid sequence, 407 residues long: Probable tRNA pseudouridine synthase D (407 aa).

Aspartate 81 (nucleophile) is an active-site residue. The region spanning 151–372 is the TRUD domain; it reads GFPNYFGIQR…PGGRRELLIR (222 aa).

It belongs to the pseudouridine synthase TruD family.

It catalyses the reaction uridine(13) in tRNA = pseudouridine(13) in tRNA. Its function is as follows. Could be responsible for synthesis of pseudouridine from uracil-13 in transfer RNAs. The polypeptide is Probable tRNA pseudouridine synthase D (Pyrococcus furiosus (strain ATCC 43587 / DSM 3638 / JCM 8422 / Vc1)).